Consider the following 155-residue polypeptide: Endoribonuclease YbeY (155 aa).

Residues His-110, His-114, and His-120 each contribute to the Zn(2+) site.

The protein belongs to the endoribonuclease YbeY family. Requires Zn(2+) as cofactor.

It localises to the cytoplasm. Functionally, single strand-specific metallo-endoribonuclease involved in late-stage 70S ribosome quality control and in maturation of the 3' terminus of the 16S rRNA. This is Endoribonuclease YbeY from Deinococcus radiodurans (strain ATCC 13939 / DSM 20539 / JCM 16871 / CCUG 27074 / LMG 4051 / NBRC 15346 / NCIMB 9279 / VKM B-1422 / R1).